The chain runs to 536 residues: Anthranilate synthase component 1 2 (536 aa).

Residues Ser59 and 299 to 301 contribute to the L-tryptophan site; that span reads PYM. A chorismate-binding site is contributed by 334–335; it reads GT. Glu361 serves as a coordination point for Mg(2+). Chorismate-binding positions include Tyr449, Arg469, 487-489, and Gly489; that span reads GAG. Mg(2+) is bound at residue Glu502.

Belongs to the anthranilate synthase component I family. In terms of assembly, tetramer of two components I and two components II. It depends on Mg(2+) as a cofactor.

The catalysed reaction is chorismate + L-glutamine = anthranilate + pyruvate + L-glutamate + H(+). The protein operates within amino-acid biosynthesis; L-tryptophan biosynthesis; L-tryptophan from chorismate: step 1/5. This is Anthranilate synthase component 1 2 (trpE2) from Haloarcula marismortui (strain ATCC 43049 / DSM 3752 / JCM 8966 / VKM B-1809) (Halobacterium marismortui).